Consider the following 609-residue polypeptide: DNA mismatch repair protein MutL (609 aa).

The interval 364–386 is disordered; sequence SVNSKPTDYRPAMSPSFKSTPNT.

It belongs to the DNA mismatch repair MutL/HexB family.

Functionally, this protein is involved in the repair of mismatches in DNA. It is required for dam-dependent methyl-directed DNA mismatch repair. May act as a 'molecular matchmaker', a protein that promotes the formation of a stable complex between two or more DNA-binding proteins in an ATP-dependent manner without itself being part of a final effector complex. The protein is DNA mismatch repair protein MutL of Rickettsia akari (strain Hartford).